A 397-amino-acid polypeptide reads, in one-letter code: Purine ribonucleoside efflux pump NepI (397 aa).

Topologically, residues 1–21 (MNENIAEKFRADGVARPNWSA) are cytoplasmic. Residues 22-42 (VFAVAFCVACLITVEFLPVSL) traverse the membrane as a helical segment. At 43–54 (LTPMAQDLGISE) the chain is on the periplasmic side. A helical transmembrane segment spans residues 55–75 (GVAGQSVTVTAFVAMFSSLFI). Residues 76–85 (TQIIQATDRR) are Cytoplasmic-facing. The helical transmembrane segment at 86-106 (YIVILFAVLLTASCLMVSFAN) threads the bilayer. Residue Ser-107 is a topological domain, periplasmic. A helical membrane pass occupies residues 108 to 128 (FTLLLLGRACLGLALGGFWAM). The Cytoplasmic portion of the chain corresponds to 129–147 (SASLTMRLVPARTVPKALS). Residues 148 to 168 (VIFGAVSIALVIAAPLGSFLG) form a helical membrane-spanning segment. Over 169–175 (GIIGWRN) the chain is Periplasmic. A helical membrane pass occupies residues 176-196 (VFNAAAVMGVLCVIWVVKSLP). Over 197–215 (SLPGEPSHQKQNMFSLLQR) the chain is Cytoplasmic. A helical transmembrane segment spans residues 216-236 (PGVMAGMIAIFMSFAGQFAFF). Topologically, residues 237-255 (TYIRPVYMNLAGFDVDGLT) are periplasmic. A helical membrane pass occupies residues 256–276 (LVLLSFGIASFVGTSFSSYVL). Residues 277–281 (KRSVK) are Cytoplasmic-facing. A helical transmembrane segment spans residues 282–302 (LALAGAPLLLALSALTLIVWG). Residues 303-305 (SDK) lie on the Periplasmic side of the membrane. The helical transmembrane segment at 306–326 (TVAAAIAIIWGLAFALVPVGW) threads the bilayer. Residues 327–343 (STWITRSLADQAEKAGS) are Cytoplasmic-facing. The helical transmembrane segment at 344–364 (IQVAVIQLANTCGAAVGGYAL) threads the bilayer. Topologically, residues 365–366 (DN) are periplasmic. A helical transmembrane segment spans residues 367-387 (FGLLSPLALSGGLMLLTALVV). The Cytoplasmic segment spans residues 388-397 (AAKVRITPMS).

Belongs to the major facilitator superfamily. DHA1 family. NepI (TC 2.A.1.2.26) subfamily.

It localises to the cell inner membrane. The enzyme catalyses inosine(in) + H(+)(out) = inosine(out) + H(+)(in). It carries out the reaction guanosine(in) + H(+)(out) = guanosine(out) + H(+)(in). Its function is as follows. Involved in the efflux of purine ribonucleosides, such as inosine and guanosine. This Salmonella choleraesuis (strain SC-B67) protein is Purine ribonucleoside efflux pump NepI.